Reading from the N-terminus, the 516-residue chain is Cytochrome P450 monooxygenase asR2 (516 aa).

The helical transmembrane segment at Leu9–Ile29 threads the bilayer. N-linked (GlcNAc...) asparagine glycosylation is found at Asn248 and Asn273. Cys461 contributes to the heme binding site.

Belongs to the cytochrome P450 family. Requires heme as cofactor.

Its subcellular location is the membrane. Its pathway is secondary metabolite biosynthesis; terpenoid biosynthesis. Functionally, cytochrome P450 monooxygenase; part of the gene cluster that mediates the biosynthesis of xenovulene A, an unusual meroterpenoid that has potent inhibitory effects on the human gamma-aminobutyrate A (GABAA) benzodiazepine receptor. The first step of xenovulene A biosynthesis is the biosynthesis of 3-methylorcinaldehyde performed by the non-reducing polyketide synthase aspks1. The salicylate hydroxylase asL1 then catalyzes the oxidative dearomatization of 3-methylorcinaldehyde to yield a dearomatized hydroxycyclohexadione. The 2-oxoglutarate-dependent dioxygenase asL3 further catalyzes the oxidative ring expansion to provide the first tropolone metabolite. The cytochrome P450 monooxygenase asR2 allows the synthesis of tropolone hemiacetal. In parallel, a previously unrecognised class of terpene cyclase, asR6, produces alpha-humulene from farnesylpyrophosphate (FPP). The putative Diels-Alderase asR5 probably catalyzes the formation of the tropolone-humulene skeleton by linking humulene and the polyketide moiety. Oxidative-ring contractions catalyzed by asL4 and asL6 then processively remove carbon atoms from the polyketide to yield xenovulene A. The chain is Cytochrome P450 monooxygenase asR2 from Sarocladium schorii (Acremonium strictum (strain IMI 501407)).